The following is a 139-amino-acid chain: NADH dehydrogenase [ubiquinone] 1 alpha subcomplex subunit MCI4 (139 aa).

It belongs to the complex I NDUFA5 subunit family.

The protein resides in the mitochondrion inner membrane. Its function is as follows. Accessory subunit of the mitochondrial membrane respiratory chain NADH dehydrogenase (Complex I), that is believed not to be involved in catalysis. Complex I functions in the transfer of electrons from NADH to the respiratory chain. The immediate electron acceptor for the enzyme is believed to be ubiquinone. Involved in osmotic and oxidative resistance, yeast to hypha transition and the ability to damage and invade oral epithelial cells. The sequence is that of NADH dehydrogenase [ubiquinone] 1 alpha subcomplex subunit MCI4 from Candida albicans (strain SC5314 / ATCC MYA-2876) (Yeast).